The chain runs to 256 residues: tRNA pseudouridine synthase A (256 aa).

The active-site Nucleophile is the D55. Y113 contributes to the substrate binding site.

This sequence belongs to the tRNA pseudouridine synthase TruA family. As to quaternary structure, homodimer.

It carries out the reaction uridine(38/39/40) in tRNA = pseudouridine(38/39/40) in tRNA. Functionally, formation of pseudouridine at positions 38, 39 and 40 in the anticodon stem and loop of transfer RNAs. The polypeptide is tRNA pseudouridine synthase A (Limosilactobacillus reuteri (strain DSM 20016) (Lactobacillus reuteri)).